We begin with the raw amino-acid sequence, 181 residues long: Regulator of G-protein signaling 10 (181 aa).

A disordered region spans residues 1–32 (MFNRAVSRLSRKRPPSDIHDSDGSSSSSHQSL). Low complexity predominate over residues 23 to 32 (GSSSSSHQSL). A phosphoserine mark is found at Ser24 and Ser41. Residues 41-156 (SLENLLEDPE…LKSDLFLKHK (116 aa)) enclose the RGS domain. The S-palmitoyl cysteine moiety is linked to residue Cys74. The interval 158 to 181 (TEEEEEDLPDAQTAAKRASRIYNT) is disordered. Ser176 is modified (phosphoserine).

As to quaternary structure, interacts with GNAZ, GNAI1 and GNAI3. Associates specifically with the activated, GTP-bound forms of GNAZ and GNAI3.

The protein resides in the cytoplasm. It is found in the cytosol. Its subcellular location is the nucleus. Its function is as follows. Regulates G protein-coupled receptor signaling cascades, including signaling downstream of the muscarinic acetylcholine receptor CHRM2. Inhibits signal transduction by increasing the GTPase activity of G protein alpha subunits, thereby driving them into their inactive GDP-bound form. Modulates the activity of potassium channels that are activated in response to CHRM2 signaling. Activity on GNAZ is inhibited by palmitoylation of the G-protein. The polypeptide is Regulator of G-protein signaling 10 (RGS10) (Homo sapiens (Human)).